The sequence spans 314 residues: Lipoyl synthase (314 aa).

The segment at 1 to 24 (MMDTPIIRHPEKVRRPDNPSPRKP) is disordered. [4Fe-4S] cluster contacts are provided by C53, C58, C64, C79, C83, C86, and S293. One can recognise a Radical SAM core domain in the interval 65–282 (WKRRHATFMI…ADIARGKGFL (218 aa)). Residues 294-308 (HHADRDFEDLRKARQ) are compositionally biased toward basic and acidic residues. The disordered stretch occupies residues 294–314 (HHADRDFEDLRKARQDAAATK).

The protein belongs to the radical SAM superfamily. Lipoyl synthase family. Requires [4Fe-4S] cluster as cofactor.

Its subcellular location is the cytoplasm. The catalysed reaction is [[Fe-S] cluster scaffold protein carrying a second [4Fe-4S](2+) cluster] + N(6)-octanoyl-L-lysyl-[protein] + 2 oxidized [2Fe-2S]-[ferredoxin] + 2 S-adenosyl-L-methionine + 4 H(+) = [[Fe-S] cluster scaffold protein] + N(6)-[(R)-dihydrolipoyl]-L-lysyl-[protein] + 4 Fe(3+) + 2 hydrogen sulfide + 2 5'-deoxyadenosine + 2 L-methionine + 2 reduced [2Fe-2S]-[ferredoxin]. The protein operates within protein modification; protein lipoylation via endogenous pathway; protein N(6)-(lipoyl)lysine from octanoyl-[acyl-carrier-protein]: step 2/2. In terms of biological role, catalyzes the radical-mediated insertion of two sulfur atoms into the C-6 and C-8 positions of the octanoyl moiety bound to the lipoyl domains of lipoate-dependent enzymes, thereby converting the octanoylated domains into lipoylated derivatives. The chain is Lipoyl synthase from Rhodospirillum rubrum (strain ATCC 11170 / ATH 1.1.1 / DSM 467 / LMG 4362 / NCIMB 8255 / S1).